A 169-amino-acid polypeptide reads, in one-letter code: Endoribonuclease YbeY (169 aa).

3 residues coordinate Zn(2+): His130, His134, and His140.

Belongs to the endoribonuclease YbeY family. Requires Zn(2+) as cofactor.

The protein resides in the cytoplasm. In terms of biological role, single strand-specific metallo-endoribonuclease involved in late-stage 70S ribosome quality control and in maturation of the 3' terminus of the 16S rRNA. The polypeptide is Endoribonuclease YbeY (Neisseria meningitidis serogroup B (strain ATCC BAA-335 / MC58)).